Consider the following 272-residue polypeptide: Glycosylphosphatidylinositol anchor biosynthesis protein 11 (272 aa).

A compositionally biased stretch (polar residues) spans 21 to 31; that stretch reads QSTSTTKSTPG. A disordered region spans residues 21–48; it reads QSTSTTKSTPGSQATESSTTTAGSSSSL. The span at 32 to 48 shows a compositional bias: low complexity; it reads SQATESSTTTAGSSSSL. 5 consecutive transmembrane segments (helical) span residues 91-111, 145-165, 177-197, 215-235, and 248-268; these read VMLNALPVVAAFQMTYALLCL, LLASVLTSIVTPFLYFAMVLF, FLCAAHLALLTLFPLFYVHGV, TFGGLVGGIVGAWLGAVPIPL, and ILCGAYGGYLLGRVLGGTLFW.

It belongs to the PIGF family.

The protein resides in the endoplasmic reticulum membrane. It functions in the pathway glycolipid biosynthesis; glycosylphosphatidylinositol-anchor biosynthesis. In terms of biological role, acts in the GPI biosynthetic pathway between GlcNAc-PI synthesis and GPI transfer to protein. This Neurospora crassa (strain ATCC 24698 / 74-OR23-1A / CBS 708.71 / DSM 1257 / FGSC 987) protein is Glycosylphosphatidylinositol anchor biosynthesis protein 11 (gpi-11).